Reading from the N-terminus, the 264-residue chain is Spermidine/putrescine transport system permease protein PotC (264 aa).

The next 6 helical transmembrane spans lie at 10 to 30, 66 to 86, 109 to 129, 131 to 151, 176 to 196, and 232 to 252; these read FMTA…VNSF, MAVF…VALY, IVMA…LGFW, LLFS…YSRL, IILP…FTLS, and ALAT…QLIA. The region spanning 60–248 is the ABC transmembrane type-1 domain; sequence AQHSLTMAVF…VLSLVMVIAS (189 aa).

This sequence belongs to the binding-protein-dependent transport system permease family. CysTW subfamily.

The protein resides in the cell inner membrane. In terms of biological role, required for the activity of the bacterial periplasmic transport system of putrescine and spermidine. The polypeptide is Spermidine/putrescine transport system permease protein PotC (potC) (Shigella flexneri).